Here is a 314-residue protein sequence, read N- to C-terminus: Malate dehydrogenase (314 aa).

NAD(+) contacts are provided by residues 11 to 16 (GSGNIG) and D35. Substrate is bound by residues R84 and R90. Residues N97 and 120–122 (ITN) each bind NAD(+). Substrate-binding residues include N122 and R153. Residue H177 is the Proton acceptor of the active site.

This sequence belongs to the LDH/MDH superfamily. MDH type 3 family.

It carries out the reaction (S)-malate + NAD(+) = oxaloacetate + NADH + H(+). Catalyzes the reversible oxidation of malate to oxaloacetate. In Rickettsia rickettsii (strain Iowa), this protein is Malate dehydrogenase.